A 100-amino-acid polypeptide reads, in one-letter code: MEMLPLVKIAPEYNLTLDPSTGMIGAALGREVIILSMDEINEQIAALEATADDLINSLDPTTIPEGSYPGREGVYLTAGKLTNIVYGFILGLIILFALLL.

Residues K80 to L100 form a helical membrane-spanning segment.

Belongs to the MtrB family. The complex is composed of 8 subunits; MtrA, MtrB, MtrC, MtrD, MtrE, MtrF, MtrG and MtrH.

The protein resides in the cell membrane. It catalyses the reaction 5-methyl-5,6,7,8-tetrahydromethanopterin + coenzyme M + 2 Na(+)(in) = 5,6,7,8-tetrahydromethanopterin + methyl-coenzyme M + 2 Na(+)(out). It functions in the pathway one-carbon metabolism; methanogenesis from CO(2); methyl-coenzyme M from 5,10-methylene-5,6,7,8-tetrahydromethanopterin: step 2/2. Functionally, part of a complex that catalyzes the formation of methyl-coenzyme M and tetrahydromethanopterin from coenzyme M and methyl-tetrahydromethanopterin. This is an energy-conserving, sodium-ion translocating step. This Methanothermobacter marburgensis (strain ATCC BAA-927 / DSM 2133 / JCM 14651 / NBRC 100331 / OCM 82 / Marburg) (Methanobacterium thermoautotrophicum) protein is Tetrahydromethanopterin S-methyltransferase subunit B.